A 379-amino-acid polypeptide reads, in one-letter code: Probable protein arginine N-methyltransferase 6.1 (379 aa).

Residues 1–35 (MLPSHLNGHSPLARRRPRLSAASPPATGDSDAAAA) form a disordered region. A compositionally biased stretch (low complexity) spans 19 to 35 (LSAASPPATGDSDAAAA). The SAM-dependent MTase PRMT-type domain occupies 45-379 (DRIYFQSYSH…FLNIQLDCTM (335 aa)). S-adenosyl-L-methionine contacts are provided by H58, R67, G91, E113, and E142. Active-site residues include E156 and E165.

Belongs to the class I-like SAM-binding methyltransferase superfamily. Protein arginine N-methyltransferase family. PRMT6 subfamily.

In terms of biological role, arginine methyltransferase that can both catalyze the formation of omega-N monomethylarginine (MMA) and asymmetrical dimethylarginine (aDMA). This Oryza sativa subsp. indica (Rice) protein is Probable protein arginine N-methyltransferase 6.1 (PRMT6.1).